A 231-amino-acid chain; its full sequence is Putative cobalt transport protein CbiM 1 (231 aa).

6 helical membrane passes run 6–26 (GFLPIGWCVFWAVLAAPFLIY), 41–61 (VLPLMAVCGAFIFVVSLVDIP), 79–99 (FFGPAVTSVLGLIILVFQALL), 107–127 (TLGATAFSMAVMGPLAAWLVF), 136–156 (VPLGPAVFCAAVVANCVTYLI), and 172–192 (LTAFLAAAAVFAVVQIPISII).

This sequence belongs to the CbiM family. Forms an energy-coupling factor (ECF) transporter complex composed of an ATP-binding protein (A component, CbiO), a transmembrane protein (T component, CbiQ) and 2 possible substrate-capture proteins (S components, CbiM and CbiN) of unknown stoichimetry.

It localises to the cell membrane. Its pathway is cofactor biosynthesis; adenosylcobalamin biosynthesis. In terms of biological role, part of the energy-coupling factor (ECF) transporter complex CbiMNOQ involved in cobalt import. This chain is Putative cobalt transport protein CbiM 1, found in Methanocorpusculum labreanum (strain ATCC 43576 / DSM 4855 / Z).